A 119-amino-acid polypeptide reads, in one-letter code: UPF0145 protein Bcep18194_B0595 (119 aa).

This sequence belongs to the UPF0145 family.

This chain is UPF0145 protein Bcep18194_B0595, found in Burkholderia lata (strain ATCC 17760 / DSM 23089 / LMG 22485 / NCIMB 9086 / R18194 / 383).